The sequence spans 570 residues: Urease subunit alpha (570 aa).

The Urease domain occupies 131–570; that stretch reads GGIDSHIHFI…LPMTQRYFLF (440 aa). 3 residues coordinate Ni(2+): H136, H138, and K219. K219 carries the N6-carboxylysine modification. H221 provides a ligand contact to substrate. Residues H248 and H274 each contribute to the Ni(2+) site. The active-site Proton donor is H322. Residue D362 coordinates Ni(2+).

The protein belongs to the metallo-dependent hydrolases superfamily. Urease alpha subunit family. As to quaternary structure, heterotrimer of UreA (gamma), UreB (beta) and UreC (alpha) subunits. Three heterotrimers associate to form the active enzyme. Ni cation is required as a cofactor. Carboxylation allows a single lysine to coordinate two nickel ions.

The protein localises to the cytoplasm. The enzyme catalyses urea + 2 H2O + H(+) = hydrogencarbonate + 2 NH4(+). It participates in nitrogen metabolism; urea degradation; CO(2) and NH(3) from urea (urease route): step 1/1. In Trichodesmium erythraeum (strain IMS101), this protein is Urease subunit alpha.